The sequence spans 1004 residues: DNA-directed RNA polymerase subunit beta' (1004 aa).

Mg(2+) is bound by residues D388, D390, and D392. Zn(2+) contacts are provided by C757, C831, C838, and C841.

This sequence belongs to the RNA polymerase beta' chain family. As to quaternary structure, the RNAP catalytic core consists of 2 alpha, 1 beta, 1 beta' and 1 omega subunit. When a sigma factor is associated with the core the holoenzyme is formed, which can initiate transcription. The cofactor is Mg(2+). Zn(2+) is required as a cofactor.

It catalyses the reaction RNA(n) + a ribonucleoside 5'-triphosphate = RNA(n+1) + diphosphate. Functionally, DNA-dependent RNA polymerase catalyzes the transcription of DNA into RNA using the four ribonucleoside triphosphates as substrates. The protein is DNA-directed RNA polymerase subunit beta' of Oenococcus oeni (Leuconostoc oenos).